Reading from the N-terminus, the 93-residue chain is ATP synthase subunit c (93 aa).

A run of 2 helical transmembrane segments spans residues 13–33 (AIGV…GMGI) and 58–78 (ISLA…FILL).

The protein belongs to the ATPase C chain family. As to quaternary structure, F-type ATPases have 2 components, F(1) - the catalytic core - and F(0) - the membrane proton channel. F(1) has five subunits: alpha(3), beta(3), gamma(1), delta(1), epsilon(1). F(0) has three main subunits: a(1), b(2) and c(10-14). The alpha and beta chains form an alternating ring which encloses part of the gamma chain. F(1) is attached to F(0) by a central stalk formed by the gamma and epsilon chains, while a peripheral stalk is formed by the delta and b chains.

It localises to the cell inner membrane. Functionally, f(1)F(0) ATP synthase produces ATP from ADP in the presence of a proton or sodium gradient. F-type ATPases consist of two structural domains, F(1) containing the extramembraneous catalytic core and F(0) containing the membrane proton channel, linked together by a central stalk and a peripheral stalk. During catalysis, ATP synthesis in the catalytic domain of F(1) is coupled via a rotary mechanism of the central stalk subunits to proton translocation. Key component of the F(0) channel; it plays a direct role in translocation across the membrane. A homomeric c-ring of between 10-14 subunits forms the central stalk rotor element with the F(1) delta and epsilon subunits. This is ATP synthase subunit c from Campylobacter hominis (strain ATCC BAA-381 / DSM 21671 / CCUG 45161 / LMG 19568 / NCTC 13146 / CH001A).